The chain runs to 127 residues: Large ribosomal subunit protein bL19 (127 aa).

This sequence belongs to the bacterial ribosomal protein bL19 family.

Functionally, this protein is located at the 30S-50S ribosomal subunit interface and may play a role in the structure and function of the aminoacyl-tRNA binding site. This Roseobacter denitrificans (strain ATCC 33942 / OCh 114) (Erythrobacter sp. (strain OCh 114)) protein is Large ribosomal subunit protein bL19.